Consider the following 383-residue polypeptide: tRNA-specific 2-thiouridylase MnmA (383 aa).

ATP-binding positions include 9–16 and M35; that span reads GMSGGVDS. The segment at 95 to 97 is interaction with target base in tRNA; it reads NPD. C100 acts as the Nucleophile in catalysis. C100 and C196 are joined by a disulfide. ATP is bound at residue G124. An interaction with tRNA region spans residues 146–148; it reads KDQ. C196 serves as the catalytic Cysteine persulfide intermediate. The interaction with tRNA stretch occupies residues 308 to 309; sequence RY.

This sequence belongs to the MnmA/TRMU family.

It is found in the cytoplasm. It catalyses the reaction S-sulfanyl-L-cysteinyl-[protein] + uridine(34) in tRNA + AH2 + ATP = 2-thiouridine(34) in tRNA + L-cysteinyl-[protein] + A + AMP + diphosphate + H(+). Its function is as follows. Catalyzes the 2-thiolation of uridine at the wobble position (U34) of tRNA, leading to the formation of s(2)U34. The protein is tRNA-specific 2-thiouridylase MnmA of Burkholderia mallei (strain NCTC 10247).